Here is a 201-residue protein sequence, read N- to C-terminus: Recombination protein RecR (201 aa).

A C4-type zinc finger spans residues 60-75 (CQVCGNVDVRDPCTVC). One can recognise a Toprim domain in the interval 83–178 (SVLVVVAEVA…KVTRLAHGVP (96 aa)).

It belongs to the RecR family.

Functionally, may play a role in DNA repair. It seems to be involved in an RecBC-independent recombinational process of DNA repair. It may act with RecF and RecO. The sequence is that of Recombination protein RecR from Azorhizobium caulinodans (strain ATCC 43989 / DSM 5975 / JCM 20966 / LMG 6465 / NBRC 14845 / NCIMB 13405 / ORS 571).